The sequence spans 396 residues: Elongation factor Tu 2 (396 aa).

The tr-type G domain maps to 10–206; it reads KPHINVGTIG…VLDSYIPEPQ (197 aa). Residues 19–26 form a G1 region; sequence GHVDHGKT. 19 to 26 contributes to the GTP binding site; sequence GHVDHGKT. Residue threonine 26 participates in Mg(2+) binding. A G2 region spans residues 60 to 64; sequence GITIN. Residues 81–84 are G3; that stretch reads DCPG. GTP-binding positions include 81–85 and 136–139; these read DCPGH and NKAD. Residues 136–139 are G4; the sequence is NKAD. The G5 stretch occupies residues 174–176; it reads SAL.

The protein belongs to the TRAFAC class translation factor GTPase superfamily. Classic translation factor GTPase family. EF-Tu/EF-1A subfamily. As to quaternary structure, monomer.

Its subcellular location is the cytoplasm. It catalyses the reaction GTP + H2O = GDP + phosphate + H(+). GTP hydrolase that promotes the GTP-dependent binding of aminoacyl-tRNA to the A-site of ribosomes during protein biosynthesis. The polypeptide is Elongation factor Tu 2 (Nitrosomonas eutropha (strain DSM 101675 / C91 / Nm57)).